The sequence spans 106 residues: UPF0145 protein TM_0763 (106 aa).

The protein belongs to the UPF0145 family.

This Thermotoga maritima (strain ATCC 43589 / DSM 3109 / JCM 10099 / NBRC 100826 / MSB8) protein is UPF0145 protein TM_0763.